The primary structure comprises 390 residues: Isotocin receptor (390 aa).

The Extracellular portion of the chain corresponds to 1-48; the sequence is MEEMFKEQDFWSFNESSRNSTVGNETFGGNQTVNPLKRNEEVAKVEVT. N-linked (GlcNAc...) asparagine glycans are attached at residues N14, N19, N24, and N30. The helical transmembrane segment at 49–69 threads the bilayer; it reads VLALVLFLALAGNLCVLIAIY. At 70–86 the chain is on the cytoplasmic side; the sequence is TAKHTQSRMYYLMKHLS. The chain crosses the membrane as a helical span at residues 87–107; sequence IADLVVAVFQVLPQLIWDITF. At 108–124 the chain is on the extracellular side; the sequence is RFYGPDFLCRLVKYLQT. A disulfide bridge connects residues C116 and C191. Residues 125 to 145 form a helical membrane-spanning segment; it reads VGMFASTYMLVLMSIDRCIAI. The Cytoplasmic portion of the chain corresponds to 146 to 160; sequence CQPLRSLHKRKDRCY. Residues 161 to 181 traverse the membrane as a helical segment; sequence VIVSWALSLVFSVPQVYIFSL. Residues 182-206 lie on the Extracellular side of the membrane; the sequence is REIGNGVYDCWGDFVQPWGAKAYIT. The helical transmembrane segment at 207–227 threads the bilayer; that stretch reads WISLTIYIIPVAILGGCYGLI. Over 228–276 the chain is Cytoplasmic; sequence SFKIWQNFKRKTKKDQCITLTTAASKANALARVSSVKLVSKAKITTVKM. A helical membrane pass occupies residues 277 to 297; it reads TFVIVLAYIVCWTPFFFVQMW. Over 298–311 the chain is Extracellular; the sequence is SAWDPEAPREAMPF. Residues 312-332 traverse the membrane as a helical segment; the sequence is IISMLLASLNSCCNPWIYMFF. The Cytoplasmic portion of the chain corresponds to 333–390; that stretch reads AGHLFHDLKQSLLCCSTLYLKSSQCRCDQEHDSRKSNCSTYVIKSTSSQRSITQSSIT.

This sequence belongs to the G-protein coupled receptor 1 family. Vasopressin/oxytocin receptor subfamily. In terms of tissue distribution, expressed in brain, intestine, bladder, skeletal muscle, lateral line, gills and kidney.

It is found in the cell membrane. Binds to isotocin. Can also be activated by vasotocin, mesotocin, oxytocin and Arg-vasopressin, although these have lower potencies than isotocin. Produces an induction of membrane chloride currents indicating that it is coupled to the inositol phosphate/calcium pathway. The sequence is that of Isotocin receptor from Catostomus commersonii (White sucker).